The primary structure comprises 377 residues: Actin-related protein T2 (377 aa).

The protein belongs to the actin family.

It localises to the cytoplasm. The protein localises to the cytoskeleton. In Macaca fascicularis (Crab-eating macaque), this protein is Actin-related protein T2 (ACTRT2).